The following is a 312-amino-acid chain: MRRKMKLWRRVSGAIKDKLSLITATDEKFTAAVIKATSHNDVSMDIENVQFIYRYIQSNPSSFKPIIRAVSLRVEHTRNWTVALKCLMLLHGLFFSGIMTVDSIGRLPFDLSGFGRRKSRFSRTGRFNIFVRAYFMFLDERSILYYNKNMIRLEIIVKMQRIVDSLMRIKPIGETPLVIEAMEYVISEVVLINGHICRGFAGFLSDVQSNMLEISSAEADLAMNIVAKSLSQREKLFKYFEFCRGFGVTNAQETSNILRITESQMIVLDKLLHIAPELDWKAAKVTPVTAADMVDLVTSEERSNTPSDFLTF.

In terms of domain architecture, ENTH spans leucine 21–arginine 152.

The protein resides in the membrane. It localises to the clathrin-coated pit. Its subcellular location is the golgi apparatus. It is found in the cytoplasmic vesicle. The protein localises to the clathrin-coated vesicle. This chain is Putative clathrin assembly protein At2g01920, found in Arabidopsis thaliana (Mouse-ear cress).